A 526-amino-acid chain; its full sequence is ATP synthase subunit alpha (526 aa).

171 to 178 (GDRQTGKT) lines the ATP pocket.

This sequence belongs to the ATPase alpha/beta chains family. In terms of assembly, F-type ATPases have 2 components, CF(1) - the catalytic core - and CF(0) - the membrane proton channel. CF(1) has five subunits: alpha(3), beta(3), gamma(1), delta(1), epsilon(1). CF(0) has four main subunits: a, b, b' and c.

It is found in the cell inner membrane. It carries out the reaction ATP + H2O + 4 H(+)(in) = ADP + phosphate + 5 H(+)(out). Produces ATP from ADP in the presence of a proton gradient across the membrane. The alpha chain is a regulatory subunit. The sequence is that of ATP synthase subunit alpha from Chlorobium phaeobacteroides (strain BS1).